Consider the following 262-residue polypeptide: Zinc import ATP-binding protein ZnuC (262 aa).

The ABC transporter domain maps to 6-221; that stretch reads IRLDKVAVTL…PAFVELFGKN (216 aa). 38-45 contributes to the ATP binding site; it reads GPNGAGKT.

It belongs to the ABC transporter superfamily. Zinc importer (TC 3.A.1.15.5) family. As to quaternary structure, the complex is composed of two ATP-binding proteins (ZnuC), two transmembrane proteins (ZnuB) and a solute-binding protein (ZnuA).

The protein resides in the cell inner membrane. It catalyses the reaction Zn(2+)(out) + ATP(in) + H2O(in) = Zn(2+)(in) + ADP(in) + phosphate(in) + H(+)(in). Functionally, part of the ABC transporter complex ZnuABC involved in zinc import. Responsible for energy coupling to the transport system. This Pseudomonas syringae pv. syringae (strain B728a) protein is Zinc import ATP-binding protein ZnuC.